Here is a 686-residue protein sequence, read N- to C-terminus: Proprotein convertase subtilisin/kexin type 9 (686 aa).

The N-terminal stretch at 1–28 is a signal peptide; that stretch reads MGTVSSRRLWWPLPLLLLLLLGPAGTRA. Residues 29–150 constitute a propeptide that is removed on maturation; that stretch reads QEDDDDDYEE…IEEDSSVFAQ (122 aa). Position 36 is a sulfotyrosine (Tyr36). Ser45 carries the post-translational modification Phosphoserine. The region spanning 75-147 is the Inhibitor I9 domain; the sequence is TYVVVLKEET…VDYIEEDSSV (73 aa). Residues 153-459 form the Peptidase S8 domain; sequence PWNLERITPA…GWQLFCRTVW (307 aa). Residues Asp184 and His224 each act as charge relay system in the active site. 2 disulfide bridges follow: Cys221–Cys253 and Cys321–Cys356. Ser384 acts as the Charge relay system in catalysis. The segment at 448–686 is C-terminal domain; it reads GEGWQLFCRT…CRSQHLAQAS (239 aa). Intrachain disulfides connect Cys455–Cys525, Cys475–Cys524, and Cys484–Cys507. Asn531 carries N-linked (GlcNAc...) asparagine glycosylation. 6 disulfides stabilise this stretch: Cys532-Cys599, Cys550-Cys598, Cys560-Cys586, Cys606-Cys677, Cys624-Cys676, and Cys633-Cys652. Phosphoserine is present on Ser686.

This sequence belongs to the peptidase S8 family. In terms of assembly, monomer. Can self-associate to form dimers and higher multimers which may have increased LDLR degrading activity. The precursor protein but not the mature protein may form multimers. Interacts with APOB, VLDLR, LRP8/APOER2 and BACE1. The full-length immature form (pro-PCSK9) interacts with SCNN1A, SCNN1B and SCNN1G. The pro-PCSK9 form (via C-terminal domain) interacts with LDLR. Interacts (via the C-terminal domain) with ANXA2 (via repeat Annexin 1); the interaction inhibits the degradation of LDLR. The cofactor is Ca(2+). In terms of processing, cleavage by furin and PCSK5 generates a truncated inactive protein that is unable to induce LDLR degradation. Post-translationally, undergoes autocatalytic cleavage in the endoplasmic reticulum to release the propeptide from the N-terminus and the cleavage of the propeptide is strictly required for its maturation and activation. The cleaved propeptide however remains associated with the catalytic domain through non-covalent interactions, preventing potential substrates from accessing its active site. As a result, it is secreted from cells as a propeptide-containing, enzymatically inactive protein. Phosphorylation protects the propeptide against proteolysis.

It localises to the cytoplasm. The protein resides in the secreted. The protein localises to the endosome. It is found in the lysosome. Its subcellular location is the cell surface. It localises to the endoplasmic reticulum. The protein resides in the golgi apparatus. With respect to regulation, its proteolytic activity is autoinhibited by the non-covalent binding of the propeptide to the catalytic domain. Inhibited by EGTA. In terms of biological role, crucial player in the regulation of plasma cholesterol homeostasis. Binds to low-density lipid receptor family members: low density lipoprotein receptor (LDLR), very low density lipoprotein receptor (VLDLR), apolipoprotein E receptor (LRP1/APOER) and apolipoprotein receptor 2 (LRP8/APOER2), and promotes their degradation in intracellular acidic compartments. Acts via a non-proteolytic mechanism to enhance the degradation of the hepatic LDLR through a clathrin LDLRAP1/ARH-mediated pathway. May prevent the recycling of LDLR from endosomes to the cell surface or direct it to lysosomes for degradation. Can induce ubiquitination of LDLR leading to its subsequent degradation. Inhibits intracellular degradation of APOB via the autophagosome/lysosome pathway in a LDLR-independent manner. Involved in the disposal of non-acetylated intermediates of BACE1 in the early secretory pathway. Inhibits epithelial Na(+) channel (ENaC)-mediated Na(+) absorption by reducing ENaC surface expression primarily by increasing its proteasomal degradation. Regulates neuronal apoptosis via modulation of LRP8/APOER2 levels and related anti-apoptotic signaling pathways. The sequence is that of Proprotein convertase subtilisin/kexin type 9 (PCSK9) from Saguinus labiatus (Red-chested mustached tamarin).